The sequence spans 362 residues: 3-dehydroquinate synthase (362 aa).

Residues D70 to K75, G104 to D108, T128 to T129, K141, K150, and T168 to T171 contribute to the NAD(+) site. Residues E183, H246, and H263 each contribute to the Zn(2+) site.

Belongs to the sugar phosphate cyclases superfamily. Dehydroquinate synthase family. Co(2+) serves as cofactor. The cofactor is Zn(2+). It depends on NAD(+) as a cofactor.

It is found in the cytoplasm. It carries out the reaction 7-phospho-2-dehydro-3-deoxy-D-arabino-heptonate = 3-dehydroquinate + phosphate. The protein operates within metabolic intermediate biosynthesis; chorismate biosynthesis; chorismate from D-erythrose 4-phosphate and phosphoenolpyruvate: step 2/7. Functionally, catalyzes the conversion of 3-deoxy-D-arabino-heptulosonate 7-phosphate (DAHP) to dehydroquinate (DHQ). The polypeptide is 3-dehydroquinate synthase (Haemophilus influenzae (strain 86-028NP)).